The sequence spans 249 residues: MSPPTVPPTGVDGVSAYLMKKRHTHKKQRRKPTFLTHRNIVGCRIQHGWKEGNEPVEQWKGTVLEQVSVKPTLYIIKYDGKDSVYGLELHRDKRVLALEILPERVPSPRIDSRLADSLVGKAVGHVFEGEHGKKDEWKGMVLARAPIMDTWFYITYEKDPVLYMYTLLDDYKDGDLRIIPDSNYYFPAAEQEPGEVLDSLVGKQVEHAKDDGSKRTGIFIHQVVAKPSVYFIKFDDDIHIYVYGLVKTP.

Tudor-like domain stretches follow at residues 41–90 (VGCR…LELH), 119–168 (VGKA…YTLL), and 201–246 (VGKQ…YGLV). Histone H3K4me3 and H3R8me2a binding stretches follow at residues 80-85 (GKDSVY), E128, and 237-239 (DIH).

This sequence belongs to the SPIN/STSY family. Interacts with C11orf84/SPINDOC. Associates with chromatin.

It is found in the cytoplasm. The protein resides in the nucleus. Binds to acetylated and methylated histones, including H3K4me3 and H4K20me3, probably acting as a histone reader that recognizes chromatin marks to mediate downstream cellular effects. Promotes canonical WNT signaling, and is involved in the down-regulation of cell proliferation. This Mus musculus (Mouse) protein is Spindlin-4 (Spin4).